Consider the following 93-residue polypeptide: Alpha-defensin 23 (93 aa).

The N-terminal stretch at 1-19 (MKTLVLLSALILLAFQVQA) is a signal peptide. Residues 20–58 (DPIQNTDEETKTEEQPGKEDQAVSVSFGDPEGSSLQEES) constitute a propeptide that is removed on maturation. Positions 24-54 (NTDEETKTEEQPGKEDQAVSVSFGDPEGSSL) are disordered. Over residues 27-40 (EETKTEEQPGKEDQ) the composition is skewed to basic and acidic residues. 3 cysteine pairs are disulfide-bonded: Cys-64/Cys-92, Cys-66/Cys-81, and Cys-71/Cys-91.

It belongs to the alpha-defensin family.

The protein resides in the secreted. Functionally, may have microbicidal activities. The sequence is that of Alpha-defensin 23 (Defa23) from Mus musculus (Mouse).